We begin with the raw amino-acid sequence, 163 residues long: ATP synthase subunit b (163 aa).

The helical transmembrane segment at 1-21 (MISFNLTSIVNLVGFLAFMFL) threads the bilayer.

It belongs to the ATPase B chain family. F-type ATPases have 2 components, F(1) - the catalytic core - and F(0) - the membrane proton channel. F(1) has five subunits: alpha(3), beta(3), gamma(1), delta(1), epsilon(1). F(0) has three main subunits: a(1), b(2) and c(10-14). The alpha and beta chains form an alternating ring which encloses part of the gamma chain. F(1) is attached to F(0) by a central stalk formed by the gamma and epsilon chains, while a peripheral stalk is formed by the delta and b chains.

The protein resides in the cell inner membrane. F(1)F(0) ATP synthase produces ATP from ADP in the presence of a proton or sodium gradient. F-type ATPases consist of two structural domains, F(1) containing the extramembraneous catalytic core and F(0) containing the membrane proton channel, linked together by a central stalk and a peripheral stalk. During catalysis, ATP synthesis in the catalytic domain of F(1) is coupled via a rotary mechanism of the central stalk subunits to proton translocation. In terms of biological role, component of the F(0) channel, it forms part of the peripheral stalk, linking F(1) to F(0). This chain is ATP synthase subunit b, found in Petrotoga mobilis (strain DSM 10674 / SJ95).